Here is a 215-residue protein sequence, read N- to C-terminus: Pyrrolidone-carboxylate peptidase (215 aa).

Catalysis depends on residues glutamate 78, cysteine 141, and histidine 165.

This sequence belongs to the peptidase C15 family. As to quaternary structure, homotetramer.

The protein resides in the cytoplasm. It catalyses the reaction Release of an N-terminal pyroglutamyl group from a polypeptide, the second amino acid generally not being Pro.. In terms of biological role, removes 5-oxoproline from various penultimate amino acid residues except L-proline. This is Pyrrolidone-carboxylate peptidase from Lacticaseibacillus paracasei (strain ATCC 334 / BCRC 17002 / CCUG 31169 / CIP 107868 / KCTC 3260 / NRRL B-441) (Lactobacillus paracasei).